The sequence spans 136 residues: Heavy metal-associated isoprenylated plant protein 19 (136 aa).

One can recognise an HMA domain in the interval 13 to 77 (YMDVEFNVSM…LKKKTGKRVK (65 aa)). The a metal cation site is built by C24 and C27. C133 bears the Cysteine methyl ester mark. C133 carries the S-farnesyl cysteine lipid modification. A propeptide spans 134–136 (SIS) (removed in mature form).

Belongs to the HIPP family.

Functionally, heavy-metal-binding protein. In Arabidopsis thaliana (Mouse-ear cress), this protein is Heavy metal-associated isoprenylated plant protein 19.